Consider the following 523-residue polypeptide: Sporulation protein 23 (523 aa).

In terms of assembly, interacts with SPO1 in meiosis.

Functionally, regulates expression of PIS1. This Saccharomyces cerevisiae (strain ATCC 204508 / S288c) (Baker's yeast) protein is Sporulation protein 23 (SPO23).